We begin with the raw amino-acid sequence, 482 residues long: MRAMPLSIGTIHFVGIGGIGMSGIAEVLHNLGYSVQGSDIADNYNVARLRTLGIRVEIGHRAENLGEAAVVVISSAVRTDNPEVVAARAALVPVVRRAEMLAELMRLKWSVAVAGTHGKTTTTSMVAALLDGAGFDPTIINGGIINALGTNARLGSGDWMVVEADESDGTFTKLPATIAVVTNMDPEHLDFYGTFEKEREAFDRFVENIPFYGFAALCTDHPEVQALVARADRRIVTYGFNPQADVRAVNVEGDHRGAFYDVQVSERVTGEARTIERVHLPMYGLHNVQNSLAAIAVAINMGIADEQIRASFARFSGVKRRFTRTGESNGVVVIDDYGHHPVEIQAVLKAARMAGSGRTIAVVQPHRYSRLSSLFEEFCTCFNDADAVIVADVYAAGEQPVEGASKEALVEGLRTHGHRNVQALPSPEALAGIVRELAQPGDMVVCLGAGSITGWANRLPAELDALHGISGGTAPAAKAGGT.

An ATP-binding site is contributed by 115 to 121; it reads GTHGKTT.

Belongs to the MurCDEF family.

It localises to the cytoplasm. It catalyses the reaction UDP-N-acetyl-alpha-D-muramate + L-alanine + ATP = UDP-N-acetyl-alpha-D-muramoyl-L-alanine + ADP + phosphate + H(+). Its pathway is cell wall biogenesis; peptidoglycan biosynthesis. Cell wall formation. The polypeptide is UDP-N-acetylmuramate--L-alanine ligase (Rhodospirillum centenum (strain ATCC 51521 / SW)).